The sequence spans 274 residues: Putative phosphoenolpyruvate synthase regulatory protein (274 aa).

An ADP-binding site is contributed by 154-161; it reads GVSRCGKT.

Belongs to the pyruvate, phosphate/water dikinase regulatory protein family. PSRP subfamily.

The enzyme catalyses [pyruvate, water dikinase] + ADP = [pyruvate, water dikinase]-phosphate + AMP + H(+). It carries out the reaction [pyruvate, water dikinase]-phosphate + phosphate + H(+) = [pyruvate, water dikinase] + diphosphate. In terms of biological role, bifunctional serine/threonine kinase and phosphorylase involved in the regulation of the phosphoenolpyruvate synthase (PEPS) by catalyzing its phosphorylation/dephosphorylation. This chain is Putative phosphoenolpyruvate synthase regulatory protein, found in Pseudomonas aeruginosa (strain LESB58).